A 464-amino-acid chain; its full sequence is tRNA modification GTPase MnmE (464 aa).

(6S)-5-formyl-5,6,7,8-tetrahydrofolate is bound by residues Arg-27, Glu-90, and Lys-129. A TrmE-type G domain is found at 222–384 (GVALVLAGSV…LYDKIRALIS (163 aa)). Residues 232-237 (NAGKSS), 251-257 (SSYPGTT), and 276-279 (DTAG) each bind GTP. Mg(2+) is bound by residues Ser-236 and Thr-257. Residue Lys-464 coordinates (6S)-5-formyl-5,6,7,8-tetrahydrofolate.

This sequence belongs to the TRAFAC class TrmE-Era-EngA-EngB-Septin-like GTPase superfamily. TrmE GTPase family. In terms of assembly, homodimer. Heterotetramer of two MnmE and two MnmG subunits. The cofactor is K(+).

It localises to the cytoplasm. Functionally, exhibits a very high intrinsic GTPase hydrolysis rate. Involved in the addition of a carboxymethylaminomethyl (cmnm) group at the wobble position (U34) of certain tRNAs, forming tRNA-cmnm(5)s(2)U34. The sequence is that of tRNA modification GTPase MnmE from Borreliella burgdorferi (strain ATCC 35210 / DSM 4680 / CIP 102532 / B31) (Borrelia burgdorferi).